The sequence spans 249 residues: Aspartate/glutamate leucyltransferase (249 aa).

This sequence belongs to the R-transferase family. Bpt subfamily.

The protein localises to the cytoplasm. The catalysed reaction is N-terminal L-glutamyl-[protein] + L-leucyl-tRNA(Leu) = N-terminal L-leucyl-L-glutamyl-[protein] + tRNA(Leu) + H(+). It catalyses the reaction N-terminal L-aspartyl-[protein] + L-leucyl-tRNA(Leu) = N-terminal L-leucyl-L-aspartyl-[protein] + tRNA(Leu) + H(+). Functions in the N-end rule pathway of protein degradation where it conjugates Leu from its aminoacyl-tRNA to the N-termini of proteins containing an N-terminal aspartate or glutamate. The protein is Aspartate/glutamate leucyltransferase of Xanthobacter autotrophicus (strain ATCC BAA-1158 / Py2).